The chain runs to 334 residues: Phosphoribosylformylglycinamidine cyclo-ligase (334 aa).

The protein belongs to the AIR synthase family.

It localises to the cytoplasm. It catalyses the reaction 2-formamido-N(1)-(5-O-phospho-beta-D-ribosyl)acetamidine + ATP = 5-amino-1-(5-phospho-beta-D-ribosyl)imidazole + ADP + phosphate + H(+). It participates in purine metabolism; IMP biosynthesis via de novo pathway; 5-amino-1-(5-phospho-D-ribosyl)imidazole from N(2)-formyl-N(1)-(5-phospho-D-ribosyl)glycinamide: step 2/2. This Pyrococcus furiosus (strain ATCC 43587 / DSM 3638 / JCM 8422 / Vc1) protein is Phosphoribosylformylglycinamidine cyclo-ligase.